The following is a 375-amino-acid chain: S-(hydroxymethyl)glutathione dehydrogenase (375 aa).

Residue cysteine 40 participates in Zn(2+) binding. NAD(+) is bound at residue histidine 41. 7 residues coordinate Zn(2+): histidine 62, glutamate 63, cysteine 92, cysteine 95, cysteine 98, cysteine 106, and cysteine 170. NAD(+) contacts are provided by residues 195-200 (GLGGIG), aspartate 219, 293-295 (IGV), and 318-320 (TAF).

The protein belongs to the zinc-containing alcohol dehydrogenase family. Class-III subfamily. In terms of assembly, homotetramer. Requires Zn(2+) as cofactor.

The catalysed reaction is a primary alcohol + NAD(+) = an aldehyde + NADH + H(+). It carries out the reaction a secondary alcohol + NAD(+) = a ketone + NADH + H(+). It catalyses the reaction S-(hydroxymethyl)glutathione + NADP(+) = S-formylglutathione + NADPH + H(+). The enzyme catalyses S-(hydroxymethyl)glutathione + NAD(+) = S-formylglutathione + NADH + H(+). The catalysed reaction is S-nitrosoglutathione + NADH + H(+) = S-(hydroxysulfenamide)glutathione + NAD(+). In terms of biological role, oxidizes long-chain alcohols and, in the presence of glutathione, is able to oxidize formaldehyde. Also acts as a S-nitroso-glutathione reductase by catalyzing the NADH-dependent reduction of S-nitrosoglutathione, thereby regulating protein S-nitrosylation. This chain is S-(hydroxymethyl)glutathione dehydrogenase (flhA), found in Paracoccus denitrificans.